The sequence spans 147 residues: Heavy metal-dependent transcription regulator 1 (147 aa).

The region spanning 1–70 (MNIGQASKVV…VEQIKDLLAL (70 aa)) is the HTH merR-type domain. A DNA-binding region (H-T-H motif) is located at residues 3-22 (IGQASKVVSGVSSKMIRYYE).

The protein resides in the cytoplasm. Transcriptional regulator involved in acid tolerance. Binds copper. The polypeptide is Heavy metal-dependent transcription regulator 1 (hmrR1) (Rhizobium meliloti (strain 1021) (Ensifer meliloti)).